Consider the following 270-residue polypeptide: SPbeta prophage-derived DNA ligase-like protein LigB (270 aa).

Residue lysine 25 is the N6-AMP-lysine intermediate of the active site.

It belongs to the ATP-dependent DNA ligase family.

This is SPbeta prophage-derived DNA ligase-like protein LigB (ligB) from Bacillus subtilis (strain 168).